The sequence spans 465 residues: Cysteine--tRNA ligase (465 aa).

A Zn(2+)-binding site is contributed by C29. The 'HIGH' region motif lies at 31-41 (PTVYNYIHIGN). Residues C209, H234, and E238 each coordinate Zn(2+). The 'KMSKS' region motif lies at 266 to 270 (KMSKS). K269 is a binding site for ATP. The residue at position 270 (S270) is a Phosphoserine.

It belongs to the class-I aminoacyl-tRNA synthetase family. Monomer. Zn(2+) serves as cofactor.

Its subcellular location is the cytoplasm. The catalysed reaction is tRNA(Cys) + L-cysteine + ATP = L-cysteinyl-tRNA(Cys) + AMP + diphosphate. The chain is Cysteine--tRNA ligase from Bacillus cereus (strain B4264).